A 37-amino-acid polypeptide reads, in one-letter code: Large ribosomal subunit protein bL36c (37 aa).

It belongs to the bacterial ribosomal protein bL36 family.

It localises to the plastid. The protein resides in the chloroplast. This Gnetum parvifolium (Small-leaved jointfir) protein is Large ribosomal subunit protein bL36c.